Consider the following 859-residue polypeptide: DNA mismatch repair protein MutS (859 aa).

Residue 615–622 (GPNMGGKS) coordinates ATP.

This sequence belongs to the DNA mismatch repair MutS family.

Functionally, this protein is involved in the repair of mismatches in DNA. It is possible that it carries out the mismatch recognition step. This protein has a weak ATPase activity. The protein is DNA mismatch repair protein MutS of Chromohalobacter salexigens (strain ATCC BAA-138 / DSM 3043 / CIP 106854 / NCIMB 13768 / 1H11).